The chain runs to 954 residues: Glycine dehydrogenase (decarboxylating) (954 aa).

Position 704 is an N6-(pyridoxal phosphate)lysine (K704).

This sequence belongs to the GcvP family. The glycine cleavage system is composed of four proteins: P, T, L and H. It depends on pyridoxal 5'-phosphate as a cofactor.

The catalysed reaction is N(6)-[(R)-lipoyl]-L-lysyl-[glycine-cleavage complex H protein] + glycine + H(+) = N(6)-[(R)-S(8)-aminomethyldihydrolipoyl]-L-lysyl-[glycine-cleavage complex H protein] + CO2. Its function is as follows. The glycine cleavage system catalyzes the degradation of glycine. The P protein binds the alpha-amino group of glycine through its pyridoxal phosphate cofactor; CO(2) is released and the remaining methylamine moiety is then transferred to the lipoamide cofactor of the H protein. The chain is Glycine dehydrogenase (decarboxylating) from Vibrio cholerae serotype O1 (strain ATCC 39541 / Classical Ogawa 395 / O395).